The sequence spans 557 residues: Probable phenylalanine--tRNA ligase beta subunit (557 aa).

The 77-residue stretch at 276–352 (MHNRSYVMGL…IAHGFNNFRR (77 aa)) folds into the B5 domain. Positions 330, 336, 339, and 340 each coordinate Mg(2+).

The protein belongs to the phenylalanyl-tRNA synthetase beta subunit family. Type 2 subfamily. In terms of assembly, tetramer of two alpha and two beta subunits. Mg(2+) serves as cofactor.

Its subcellular location is the cytoplasm. The catalysed reaction is tRNA(Phe) + L-phenylalanine + ATP = L-phenylalanyl-tRNA(Phe) + AMP + diphosphate + H(+). This Encephalitozoon cuniculi (strain GB-M1) (Microsporidian parasite) protein is Probable phenylalanine--tRNA ligase beta subunit.